A 410-amino-acid polypeptide reads, in one-letter code: BRCA1-A complex subunit Abraxas 1 (410 aa).

Residues 7 to 160 (TAVLSGFVLG…HALYKPQKGL (154 aa)) enclose the MPN domain. Phosphoserine is present on S48. Positions 208-261 (SLKEVQKINEMYTSLQDELKSICEKVEHSERAVEKLLNDVNRLKGEIKKRKQAQ) form a coiled coil. The interval 354-410 (DGWQFKKSRLGGIQNRPSKTDTNSSNQEQASTVSSPETDEEIERMKGSGEYPQSPTF) is disordered. Residues 368–389 (NRPSKTDTNSSNQEQASTVSSP) show a composition bias toward polar residues. Phosphoserine is present on residues S387 and S388. T391 bears the Phosphothreonine mark. The residue at position 407 (S407) is a Phosphoserine. Positions 407–410 (SPTF) match the pSXXF motif motif.

This sequence belongs to the FAM175 family. Abraxas subfamily. Component of the ARISC complex, at least composed of UIMC1/RAP80, ABRAXAS1, BRCC3/BRCC36, BABAM2 and BABAM1/NBA1. Component of the BRCA1-A complex, at least composed of the BRCA1, BARD1, UIMC1/RAP80, ABRAXAS1, BRCC3/BRCC36, BABAM2 and BABAM1/NBA1. In the complex, interacts directly with UIMC1/RAP80, BRCC3/BRCC36 and BABAM2. Homodimer. Interacts directly (when phosphorylated at Ser-407) with BRCA1. The phosphorylated homodimer can interact directly with two BRCA1 chains, giving rise to a heterotetramer. Binds polyubiquitin. Phosphorylation of Ser-407 of the pSXXF motif by ATM or ATR constitutes a specific recognition motif for the BRCT domain of BRCA1.

It is found in the nucleus. Its function is as follows. Involved in DNA damage response and double-strand break (DSB) repair. Component of the BRCA1-A complex, acting as a central scaffold protein that assembles the various components of the complex and mediates the recruitment of BRCA1. The BRCA1-A complex specifically recognizes 'Lys-63'-linked ubiquitinated histones H2A and H2AX at DNA lesion sites, leading to target the BRCA1-BARD1 heterodimer to sites of DNA damage at DSBs. This complex also possesses deubiquitinase activity that specifically removes 'Lys-63'-linked ubiquitin on histones H2A and H2AX. The chain is BRCA1-A complex subunit Abraxas 1 from Bos taurus (Bovine).